Reading from the N-terminus, the 323-residue chain is Movement protein (323 aa).

Residues 292-322 (SLLENKDENLLRSMSTKIDTLGKKLSLIYDN) are a coiled coil.

This sequence belongs to the caulimoviridae movement protein family. In terms of assembly, homotrimer, through the coiled-coil domain. Interacts with VAP.

It is found in the host cell junction. The protein localises to the host plasmodesma. Transports viral genome to neighboring plant cells directly through plasmosdesmata, without any budding. The movement protein allows efficient cell to cell propagation, by bypassing the host cell wall barrier. Acts by forming tubules structures that increase the size exclusion limit (SEL) of plasmodesmata, thereby allowing viral ribonucleocapsids to spread directly to neighboring cells. This Figwort mosaic virus (strain DxS) (FMV) protein is Movement protein.